Reading from the N-terminus, the 238-residue chain is Heme oxygenase 1 (238 aa).

It belongs to the heme oxygenase family.

The catalysed reaction is heme b + 3 reduced [NADPH--hemoprotein reductase] + 3 O2 = biliverdin IXalpha + CO + Fe(2+) + 3 oxidized [NADPH--hemoprotein reductase] + 3 H2O + H(+). Catalyzes the opening of the heme ring with the release of iron. Key enzyme in the synthesis of the chromophoric part of the photosynthetic antennae. Upon overexpression in E.coli with PCB:ferredoxin oxidoreductase, CpeS and either CpcB or PecB permits synthesis of phycocyanin-coupled CpcB or PecB. The protein is Heme oxygenase 1 (pbsA1) of Nostoc sp. (strain PCC 7120 / SAG 25.82 / UTEX 2576).